The primary structure comprises 452 residues: MSLMQFSGLLVVWLLSTLFIATLTWFEFRRVRFNFNVFFSLLFLLTFFFGFPLTSVLVFRFDVGVAPPEILLQALLSAACFYGVYYVTYKTRLRKRVVDVPRKPLFTMNRVETHLTWVILMGIALVSVAIFFMHNGFLLFRLHSYSQIFSSEVSGVALKRFFYFFIPAMLVVYFLRQDSKAWLFFLVSTVAFGLLTYMIVGGTRANIIIAFAIFLFIGIIRGWISLWMLAAAGVLGIVGMFWLALKRYGLNVSGDEAFYTFLYLTRDTFSPWENLALLLQNYHNIDFQGLAPIVRDFYVFIPTWLWPGRPSIVLNSANYFTWEVLNNHSGLAISPTLIGSLVVMGGALFIPLGAIVVGLIIKWFDWLYELGNREPNRYKAAILHSFCFGAIFNMIVLAREGLDSFVSRVVFFLVVFGASLLVAKLLFWLFDSAGLIHKRTTSLPQAQMDGKL.

11 helical membrane-spanning segments follow: residues 6–26 (FSGLLVVWLLSTLFIATLTWF), 37–57 (VFFSLLFLLTFFFGFPLTSVL), 63–83 (VGVAPPEILLQALLSAACFYG), 118–138 (VILMGIALVSVAIFFMHNGFL), 155–175 (GVALKRFFYFFIPAMLVVYFL), 181–201 (AWLFFLVSTVAFGLLTYMIVG), 207–227 (IIIAFAIFLFIGIIRGWISLW), 228–248 (MLAAAGVLGIVGMFWLALKRY), 341–361 (LVVMGGALFIPLGAIVVGLII), 378–398 (YKAAILHSFCFGAIFNMIVLA), and 410–430 (VFFLVVFGASLLVAKLLFWLF).

Belongs to the WzyE family. As to quaternary structure, probably part of a complex composed of WzxE, WzyE and WzzE.

The protein localises to the cell inner membrane. The protein operates within bacterial outer membrane biogenesis; enterobacterial common antigen biosynthesis. Functionally, probably involved in the polymerization of enterobacterial common antigen (ECA) trisaccharide repeat units. The polypeptide is Probable ECA polymerase (Salmonella typhi).